The chain runs to 628 residues: Somatic embryogenesis receptor kinase 2 (628 aa).

The first 29 residues, 1-29 (MGRKKFEAFGFVCLISLLLLFNSLWLASS), serve as a signal peptide directing secretion. Over 30–241 (NMEGDALHSL…PTPGGYSATG (212 aa)) the chain is Extracellular. The PSKR1 binding stretch occupies residues 45-85 (DPNNVLQSWDPTLVNPCTWFHVTCNNENSVIRVDLGNADLS). Residues 56 to 58 (TLV) are CLE44 binding. An intrachain disulfide couples cysteine 61 to cysteine 68. Leucine-rich repeat receptor-like protein kinase binding regions lie at residues 62–81 (TWFH…DLGN) and 100–105 (YLELYS). 64–65 (FH) provides a ligand contact to brassinolide. 4 LRR repeats span residues 95–119 (LKNL…LGNL), 121–143 (NLVS…LGKL), 144–167 (FKLR…LTNI), and 168–192 (MTLQ…SFSL). 2 N-linked (GlcNAc...) asparagine glycosylation sites follow: asparagine 107 and asparagine 118. 2 leucine-rich repeat receptor-like protein kinase binding regions span residues 126–129 (DLYL) and 148–150 (FLR). N-linked (GlcNAc...) asparagine glycans are attached at residues asparagine 153 and asparagine 187. A leucine-rich repeat receptor-like protein kinase binding region spans residues 174–197 (DLSNNRLSGSVPDNGSFSLFTPIS). Cysteine 205 and cysteine 213 form a disulfide bridge. The helical transmembrane segment at 242 to 262 (AIAGGVAAGAALLFAAPALAF) threads the bilayer. The Cytoplasmic segment spans residues 263–628 (AWWRRRKPQE…LHAMELSGPR (366 aa)). The residue at position 302 (threonine 302) is a Phosphothreonine. Positions 305–592 (FSNKNILGRG…GLAEKWDEWQ (288 aa)) constitute a Protein kinase domain. 311 to 319 (LGRGGFGKV) is an ATP binding site. Threonine 328 carries the phosphothreonine modification. ATP is bound at residue lysine 333. 2 positions are modified to phosphoserine: serine 386 and serine 389. The active-site Proton acceptor is aspartate 432. Phosphothreonine occurs at positions 462, 465, 466, and 471. Tyrosine 479 bears the Phosphotyrosine mark. Serine 481 is modified (phosphoserine). Threonine 482 bears the Phosphothreonine mark. At serine 486 the chain carries Phosphoserine. Threonine 562 bears the Phosphothreonine mark. Serine 604 is subject to Phosphoserine. Threonine 616 is subject to Phosphothreonine. Serine 625 is modified (phosphoserine).

The protein belongs to the protein kinase superfamily. Ser/Thr protein kinase family. As to quaternary structure, homo- and heterodimer. Component of the SERK1 signaling complex, composed of KAPP, CDC48A, GRF6 or GRF7, SERK1, SERK2, SERK3/BAK1 and BRI1. Bind to BRI1 in a brassinolide-dependent manner. Heterodimer with PSKR1. Interacts with the EF-Tu receptor EFR and FLS2 in a specific ligand-induced manner. Interacts with ERECTA in a EPF2-induced manner. Interacts with ERL1 in a EPF1-induced manner. Interacts with TMM. In the presence of the signal peptide RGF1, interacts with RGI3/RGFR1 and RGI4/RGFR2/SKM2. Binds to the peptide CLE44 in the presence of TDR. Post-translationally, autophosphorylated. Expressed in flowers, tapetum, developing microspores, all cells of the embryo sac, provascular strands and developing vascular bundles. Low expression in adult vascular tissue.

It localises to the cell membrane. It carries out the reaction L-seryl-[protein] + ATP = O-phospho-L-seryl-[protein] + ADP + H(+). It catalyses the reaction L-threonyl-[protein] + ATP = O-phospho-L-threonyl-[protein] + ADP + H(+). Functionally, serine/threonine-kinase involved in brassinosteroid-dependent and -independent signaling pathways. Acts redundantly with SERK1 as a control point for sporophytic development controlling male gametophyte production. Serves as coreceptor to small peptide (e.g. RGF1 and CLE44) signaling. Involved in the perception of phytosulfokine and subsequent signal transduction. The protein is Somatic embryogenesis receptor kinase 2 of Arabidopsis thaliana (Mouse-ear cress).